Here is a 282-residue protein sequence, read N- to C-terminus: N-acetylaspartate synthetase (282 aa).

A helical transmembrane segment spans residues 103-125; that stretch reads FLTVMCYVMTKSFTLTFCAPFIL. One can recognise an N-acetyltransferase domain in the interval 110 to 269; it reads VMTKSFTLTF…RSPLERLFFQ (160 aa).

This sequence belongs to the NAT8 family.

Its subcellular location is the cytoplasm. The protein localises to the microsome membrane. The protein resides in the mitochondrion membrane. It is found in the endoplasmic reticulum membrane. It catalyses the reaction L-aspartate + acetyl-CoA = N-acetyl-L-aspartate + CoA + H(+). Its function is as follows. Catalyzes the synthesis of N-acetylaspartate acid (NAA) from L-aspartate and acetyl-CoA. The sequence is that of N-acetylaspartate synthetase (nat8l) from Danio rerio (Zebrafish).